The sequence spans 855 residues: Suppressor of tumorigenicity 14 protein homolog (855 aa).

The interval 1 to 21 (MKSERARRGAGGSGDLGAGFK) is disordered. The Cytoplasmic segment spans residues 1–55 (MKSERARRGAGGSGDLGAGFKYTSRPENMNGCEEGVEFLPANNSSKVEKGGPRRW). Serine 13 carries the phosphoserine modification. Residues 56-76 (VVLMAVLAAFLALSLLAGLLA) form a helical; Signal-anchor for type II membrane protein membrane-spanning segment. The Extracellular segment spans residues 77 to 855 (WHFQDRNVRV…RDWIKAQIGV (779 aa)). One can recognise an SEA domain in the interval 86-203 (VQKIFNGYLS…TSVVAFPSDP (118 aa)). Residue asparagine 109 is glycosylated (N-linked (GlcNAc...) asparagine). The cysteines at positions 214 and 244 are disulfide-linked. 2 CUB domains span residues 214–334 (CSFA…FFQL) and 340–447 (CGGY…FLSF). Residues asparagine 302 and asparagine 365 are each glycosylated (N-linked (GlcNAc...) asparagine). 15 disulfides stabilise this stretch: cysteine 340–cysteine 366, cysteine 397–cysteine 410, cysteine 453–cysteine 464, cysteine 459–cysteine 477, cysteine 471–cysteine 486, cysteine 488–cysteine 501, cysteine 496–cysteine 514, cysteine 508–cysteine 523, cysteine 525–cysteine 537, cysteine 532–cysteine 550, cysteine 544–cysteine 559, cysteine 567–cysteine 579, cysteine 574–cysteine 593, cysteine 587–cysteine 602, and cysteine 641–cysteine 657. 4 consecutive LDL-receptor class A domains span residues 452–487 (PCPG…LDCK), 487–524 (KCNA…EGCS), 524–560 (SCPP…AKCQ), and 566–603 (PCTE…KDCD). A glycan (N-linked (GlcNAc...) asparagine) is linked at asparagine 489. In terms of domain architecture, Peptidase S1 spans 615-854 (VVGGENSDQG…FRDWIKAQIG (240 aa)). Catalysis depends on charge relay system residues histidine 656 and aspartate 711. Asparagine 772 carries an N-linked (GlcNAc...) asparagine glycan. 2 disulfide bridges follow: cysteine 776–cysteine 790 and cysteine 801–cysteine 830. The active-site Charge relay system is serine 805.

Belongs to the peptidase S1 family. Interacts with CDCP1. May interact with TMEFF1.

It is found in the membrane. The catalysed reaction is Cleaves various synthetic substrates with Arg or Lys at the P1 position and prefers small side-chain amino acids, such as Ala and Gly, at the P2 position.. Its function is as follows. Exhibits trypsin-like activity as defined by cleavage of synthetic substrates with Arg or Lys as the P1 site. Involved in the terminal differentiation of keratinocytes through prostasin (PRSS8) activation and filaggrin (FLG) processing. Proteolytically cleaves and therefore activates TMPRSS13. In Bos taurus (Bovine), this protein is Suppressor of tumorigenicity 14 protein homolog (ST14).